A 197-amino-acid chain; its full sequence is MFEYPQGYELIAGVDEVGRGPLVGAVVTAAVILDPNNPIEGLADSKKLSEKKRLALAEEIKEKALAWALGRAEANEIDEINILQASLLAMTRAVKSLKIQPHFVLVDGNKIPKDLAIPAQAVVKGDNLVAEISAASILAKVARDQEMEELDKQYPEYAFAQHKGYPTKLHLEKLAELGALPQHRRSFAPVKKALEQF.

Residues 9-197 (ELIAGVDEVG…APVKKALEQF (189 aa)) form the RNase H type-2 domain. A divalent metal cation is bound by residues Asp-15, Glu-16, and Asp-107.

The protein belongs to the RNase HII family. The cofactor is Mn(2+). It depends on Mg(2+) as a cofactor.

It localises to the cytoplasm. The catalysed reaction is Endonucleolytic cleavage to 5'-phosphomonoester.. Endonuclease that specifically degrades the RNA of RNA-DNA hybrids. This chain is Ribonuclease HII, found in Haemophilus influenzae (strain 86-028NP).